Consider the following 445-residue polypeptide: Phosphoglucosamine mutase 1 (445 aa).

The Phosphoserine intermediate role is filled by S102. Residues S102, D241, D243, and D245 each coordinate Mg(2+). S102 carries the post-translational modification Phosphoserine.

This sequence belongs to the phosphohexose mutase family. Requires Mg(2+) as cofactor. In terms of processing, activated by phosphorylation.

The catalysed reaction is alpha-D-glucosamine 1-phosphate = D-glucosamine 6-phosphate. In terms of biological role, catalyzes the conversion of glucosamine-6-phosphate to glucosamine-1-phosphate. The sequence is that of Phosphoglucosamine mutase 1 from Shewanella baltica (strain OS185).